Reading from the N-terminus, the 385-residue chain is tRNA-specific 2-thiouridylase MnmA (385 aa).

Residues alanine 18 to serine 25 and leucine 44 each bind ATP. Catalysis depends on cysteine 112, which acts as the Nucleophile. Cysteine 112 and cysteine 209 are disulfide-bonded. An ATP-binding site is contributed by glycine 136. The interaction with tRNA stretch occupies residues arginine 159–glutamine 161. The active-site Cysteine persulfide intermediate is the cysteine 209.

It belongs to the MnmA/TRMU family.

The protein resides in the cytoplasm. It carries out the reaction S-sulfanyl-L-cysteinyl-[protein] + uridine(34) in tRNA + AH2 + ATP = 2-thiouridine(34) in tRNA + L-cysteinyl-[protein] + A + AMP + diphosphate + H(+). Its function is as follows. Catalyzes the 2-thiolation of uridine at the wobble position (U34) of tRNA, leading to the formation of s(2)U34. This is tRNA-specific 2-thiouridylase MnmA from Methylorubrum populi (strain ATCC BAA-705 / NCIMB 13946 / BJ001) (Methylobacterium populi).